Reading from the N-terminus, the 100-residue chain is Integration host factor subunit beta (100 aa).

It belongs to the bacterial histone-like protein family. As to quaternary structure, heterodimer of an alpha and a beta chain.

In terms of biological role, this protein is one of the two subunits of integration host factor, a specific DNA-binding protein that functions in genetic recombination as well as in transcriptional and translational control. This Rhodospirillum rubrum (strain ATCC 11170 / ATH 1.1.1 / DSM 467 / LMG 4362 / NCIMB 8255 / S1) protein is Integration host factor subunit beta.